Reading from the N-terminus, the 419-residue chain is Innexin-2 (419 aa).

The next 4 membrane-spanning stretches (helical) occupy residues 33-53 (AWFTPFVLVAMTLAISCKQYF), 108-128 (PLVLLFQAAMFVLPYHLWNLF), 184-204 (INYFLLKLGFIVNCILQMVLL), and 270-290 (LYICFYFWLIFVFVVTTAGMI).

This sequence belongs to the pannexin family.

The protein localises to the cell membrane. The protein resides in the cell junction. Its subcellular location is the gap junction. Its function is as follows. Structural component of the gap junctions. This Caenorhabditis elegans protein is Innexin-2 (inx-2).